Consider the following 430-residue polypeptide: MAEITNIRPSFDVSPVAAGLIGASVLVVCVSVTVFVWTCCHQQAEKKHKTPPYKFIHMLKGISIYPETLSNKKKIIKVRRDKDGPRRESGRGNLLINAESGLLSHDKDPRGPSPASCMDQLPIKRDYGEELRSPMTSLTPGESKATSPSSPEEDVMLGSLTFSVDYNFPKKALVVTIQEAHGLPVMDDQTQGSDPYIKMTILPDKRHRVKTRVLRKTLDPVFDETFTFYGIPYSQLQDLVLHFLVLSFDRFSRDDVIGEVMVPLAGVDPSTGKVQLTRDIIKRNIQKCISRGELQVSLSYQPVAQRMTVVVLKARHLPKMDITGLSGNPYVKVNVYYGRKRIAKKKTHVKKCTLNPVFNESFIYDIPTDLLPDISIEFLVIDFDRTTKNEVVGRLILGAHSVTTSGAEHWREVCESPRKPIAKWHSLSEY.

Topologically, residues 1–15 (MAEITNIRPSFDVSP) are vesicular. Residues 16–36 (VAAGLIGASVLVVCVSVTVFV) form a helical membrane-spanning segment. Residues 37 to 430 (WTCCHQQAEK…IAKWHSLSEY (394 aa)) lie on the Cytoplasmic side of the membrane. Residues 79–90 (RRDKDGPRRESG) show a composition bias toward basic and acidic residues. 2 disordered regions span residues 79–120 (RRDK…CMDQ) and 132–152 (RSPM…SSPE). Ser133 bears the Phosphoserine mark. Over residues 134–150 (PMTSLTPGESKATSPSS) the composition is skewed to polar residues. C2 domains lie at 156–278 (MLGS…QLTR) and 290–425 (SRGE…AKWH). Ca(2+)-binding residues include Asp249, Ser252, and Asp255.

It belongs to the synaptotagmin family. As to quaternary structure, homodimer. Can also form heterodimers. Interacts with PRKN. Interacts (via C2 2 domain) with AGO2 and SND1; the interaction with SND1 is direct. Interacts with KIF1A; the interaction increases in presence of calcium. The cofactor is Ca(2+). Ubiquitinated, at least by PRKN, and targeted to the proteasome complex for degradation. Ubiquitination is inhibited by ATP13A2. Expressed in cerebellun, cerebellar cortex, hippocampus, olfactory bulb and spinal cord (at protein level). Expressed by neurons, astrocytes and microglia (at protein level). Expressed in macrophages (at protein level).

Its subcellular location is the cytoplasmic vesicle membrane. The protein resides in the perikaryon. It is found in the golgi apparatus. It localises to the trans-Golgi network membrane. The protein localises to the recycling endosome membrane. Its subcellular location is the lysosome membrane. The protein resides in the cytoplasmic vesicle. It is found in the phagosome. It localises to the cell projection. The protein localises to the axon. Its subcellular location is the dendrite. The protein resides in the postsynaptic density. It is found in the clathrin-coated vesicle membrane. Synaptotagmin family member involved in vesicular and membrane trafficking which does not bind Ca(2+). Inhibits clathrin-mediated and bulk endocytosis, functions to ensure precision in vesicle retrieval. Plays an important role in dopamine transmission by regulating endocytosis and the vesicle-recycling process. Essential component of a neuronal vesicular trafficking pathway that differs from the synaptic vesicle trafficking pathway but is crucial for development and synaptic plasticity. In macrophages and microglia, inhibits the conventional cytokine secretion, of at least IL6 and TNF, and phagocytosis. In astrocytes, regulates lysosome exocytosis, mechanism required for the repair of injured astrocyte cell membrane. Required for the ATP13A2-mediated regulation of the autophagy-lysosome pathway. The chain is Synaptotagmin-11 from Mus musculus (Mouse).